The chain runs to 137 residues: MSNDNKKVYTLEEVAKHNSKDDCWLIIGGKVYNVSKFLEDHPGGDDVLLSSTGKDATDDFEDVGHSTTARAMMDEYYVGDIDTSTIPARTKYVPPKQPHYNQDKTPEFIIKILQFLVPLAILGLAVAIRIYTKSESA.

One can recognise a Cytochrome b5 heme-binding domain in the interval 6–82; that stretch reads KKVYTLEEVA…MDEYYVGDID (77 aa). His-41 and His-65 together coordinate heme. A helical transmembrane segment spans residues 108–128; that stretch reads FIIKILQFLVPLAILGLAVAI.

It belongs to the cytochrome b5 family.

The protein localises to the endoplasmic reticulum membrane. Its subcellular location is the microsome membrane. In terms of biological role, membrane bound hemoprotein which function as an electron carrier for several membrane bound oxygenases. In Oryza sativa subsp. japonica (Rice), this protein is Cytochrome b5.